The chain runs to 163 residues: Phosphopantetheine adenylyltransferase (163 aa).

Thr-9 is a substrate binding site. ATP-binding positions include 9 to 10 and His-17; that span reads TF. Lys-41, Leu-76, and Arg-90 together coordinate substrate. Residues 91–93, Glu-101, and 126–132 each bind ATP; these read GLR and HQAIASR.

The protein belongs to the bacterial CoaD family. In terms of assembly, homohexamer. Mg(2+) serves as cofactor.

It is found in the cytoplasm. The catalysed reaction is (R)-4'-phosphopantetheine + ATP + H(+) = 3'-dephospho-CoA + diphosphate. It functions in the pathway cofactor biosynthesis; coenzyme A biosynthesis; CoA from (R)-pantothenate: step 4/5. In terms of biological role, reversibly transfers an adenylyl group from ATP to 4'-phosphopantetheine, yielding dephospho-CoA (dPCoA) and pyrophosphate. This Caulobacter vibrioides (strain ATCC 19089 / CIP 103742 / CB 15) (Caulobacter crescentus) protein is Phosphopantetheine adenylyltransferase.